The following is a 332-amino-acid chain: Ribosomal RNA small subunit methyltransferase C (332 aa).

The protein belongs to the methyltransferase superfamily. RsmC family. In terms of assembly, monomer.

Its subcellular location is the cytoplasm. The enzyme catalyses guanosine(1207) in 16S rRNA + S-adenosyl-L-methionine = N(2)-methylguanosine(1207) in 16S rRNA + S-adenosyl-L-homocysteine + H(+). Specifically methylates the guanine in position 1207 of 16S rRNA in the 30S particle. This is Ribosomal RNA small subunit methyltransferase C from Pseudomonas aeruginosa (strain UCBPP-PA14).